The following is a 122-amino-acid chain: Large ribosomal subunit protein uL14 (122 aa).

The protein belongs to the universal ribosomal protein uL14 family. Part of the 50S ribosomal subunit. Forms a cluster with proteins L3 and L19. In the 70S ribosome, L14 and L19 interact and together make contacts with the 16S rRNA in bridges B5 and B8.

Functionally, binds to 23S rRNA. Forms part of two intersubunit bridges in the 70S ribosome. This Shewanella amazonensis (strain ATCC BAA-1098 / SB2B) protein is Large ribosomal subunit protein uL14.